Here is a 399-residue protein sequence, read N- to C-terminus: Argininosuccinate synthase (399 aa).

9-17 (AYSGGLDTS) provides a ligand contact to ATP. L-citrulline is bound at residue Tyr85. Gly115 provides a ligand contact to ATP. Residues Thr117, Asn121, and Asp122 each coordinate L-aspartate. Residue Asn121 participates in L-citrulline binding. Residues Arg125, Ser173, Glu258, and Tyr270 each contribute to the L-citrulline site.

The protein belongs to the argininosuccinate synthase family. Type 1 subfamily. In terms of assembly, homotetramer.

It is found in the cytoplasm. It carries out the reaction L-citrulline + L-aspartate + ATP = 2-(N(omega)-L-arginino)succinate + AMP + diphosphate + H(+). Its pathway is amino-acid biosynthesis; L-arginine biosynthesis; L-arginine from L-ornithine and carbamoyl phosphate: step 2/3. This chain is Argininosuccinate synthase, found in Streptococcus gordonii (strain Challis / ATCC 35105 / BCRC 15272 / CH1 / DL1 / V288).